The sequence spans 92 residues: MKILLLTLVVVTIVCLDLAYTRTCFRTPYKPETCPPGQNLCYKKSWCDAFCSSRGKVIELGCTAKCPTVKDGKDITCCATDNCNTVANWKSR.

The signal sequence occupies residues 1–21 (MKILLLTLVVVTIVCLDLAYT). 5 disulfide bridges follow: C24-C41, C34-C62, C47-C51, C66-C77, and C78-C83.

It belongs to the three-finger toxin family. Long-chain subfamily. Type II alpha-neurotoxin sub-subfamily. Expressed by the venom gland.

The protein localises to the secreted. Its function is as follows. Binds with high affinity to muscular (alpha-1/CHRNA1) and neuronal (alpha-7/CHRNA7) nicotinic acetylcholine receptor (nAChR) and inhibits acetylcholine from binding to the receptor, thereby impairing neuromuscular and neuronal transmission. The chain is Long neurotoxin 1 from Hydrophis hardwickii (Hardwick's spine-bellied seasnake).